We begin with the raw amino-acid sequence, 203 residues long: MTLVPYVVEDTGRGERAMDIYSRLLKDRIVMIGQEITEPLANTVIAQLLFLMSEDPTKDIQIFINSPGGYITAGLAIYDTIRFLGCDVNTYCIGQAASMGALLLSAGTKGKRYALPHSRMMIHQPSGGIIGTSADIQLQAAEILTLKKHLSNILAECTGQSVEKIIEDSERDFFMGAEEAIAYGLIDKVISSAKETKDKSIAS.

The active-site Nucleophile is the serine 98. Residue histidine 123 is part of the active site.

The protein belongs to the peptidase S14 family. In terms of assembly, fourteen ClpP subunits assemble into 2 heptameric rings which stack back to back to give a disk-like structure with a central cavity, resembling the structure of eukaryotic proteasomes.

Its subcellular location is the cytoplasm. It catalyses the reaction Hydrolysis of proteins to small peptides in the presence of ATP and magnesium. alpha-casein is the usual test substrate. In the absence of ATP, only oligopeptides shorter than five residues are hydrolyzed (such as succinyl-Leu-Tyr-|-NHMec, and Leu-Tyr-Leu-|-Tyr-Trp, in which cleavage of the -Tyr-|-Leu- and -Tyr-|-Trp bonds also occurs).. In terms of biological role, cleaves peptides in various proteins in a process that requires ATP hydrolysis. Has a chymotrypsin-like activity. Plays a major role in the degradation of misfolded proteins. In Chlamydia trachomatis serovar A (strain ATCC VR-571B / DSM 19440 / HAR-13), this protein is ATP-dependent Clp protease proteolytic subunit 2.